Reading from the N-terminus, the 104-residue chain is uncharacterized protein (104 aa).

The disordered stretch occupies residues 1–24 (MISTEKSSDAVAMHCPSGDQHNSE).

This is an uncharacterized protein from Saccharomyces cerevisiae (strain ATCC 204508 / S288c) (Baker's yeast).